The sequence spans 509 residues: Cytochrome P450 monooxygenase FUP2 (509 aa).

Helical transmembrane passes span 16 to 36 (FGLA…YGCF) and 224 to 244 (MVEA…FGIA). Position 450 (Cys-450) interacts with heme.

Belongs to the cytochrome P450 family. It depends on heme as a cofactor.

It is found in the membrane. Its pathway is secondary metabolite biosynthesis. Its function is as follows. Cytochrome P450 monooxygenase; part of the gene cluster that mediates the biosynthesis of the mycotoxin fusaproliferin (FUP) that belongs to the class of bicyclic sesterterpenoids. FUP2 introduces a hydroxyl group at the C-24 position resulting in the formation of preterpestacin IIa, which can be further oxidized. The oxidation of the hydroxyl group at C-24 to an aldehyde and further to a carboxylic group takes place via unspecific alcohol and aldehyde dehydrogenases and leads to the shunt products preterpestacin IIc and preterpestacin IIb, respectively. The FUP biosynthetic pathway starts with the enzyme encoded by FUP1 that combines a C-terminal prenyltransferase domain responsible for the synthesis of geranylgeranyl diphosphate with the N-terminal terpene cyclase domain, to yield preterpestacin I. Preterpestacin I is then decorated by oxygenation steps that are catalyzed by two cytochrome P450 monooxygenases. First, FUP2 introduces a hydroxyl group at the C-24 position resulting in the formation of preterpestacin IIa. The second P450 monooxygenase catalyzes the hydroxylation at C-16 and C-17 of preterpestacin IIa, producing preterpestacin III. Subsequently, the FAD-dependent oxidoreductase FUP4 catalyzes the oxidation of the hydroxy group at the C-16 position to a keto group, leading to the formation of (-)-terpestacin, which is the immediate precursor of FUP. The final step in the proposed biosynthetic pathway is the addition of an acetyl group at the C-24 position of terpestacin, which is catalyzed by the acetyltransferase FUP5. The protein is Cytochrome P450 monooxygenase FUP2 of Fusarium proliferatum (strain ET1) (Orchid endophyte fungus).